The sequence spans 196 residues: NADH-quinone oxidoreductase subunit C (196 aa).

The protein belongs to the complex I 30 kDa subunit family. NDH-1 is composed of 14 different subunits. Subunits NuoB, C, D, E, F, and G constitute the peripheral sector of the complex.

The protein localises to the cell inner membrane. It catalyses the reaction a quinone + NADH + 5 H(+)(in) = a quinol + NAD(+) + 4 H(+)(out). In terms of biological role, NDH-1 shuttles electrons from NADH, via FMN and iron-sulfur (Fe-S) centers, to quinones in the respiratory chain. The immediate electron acceptor for the enzyme in this species is believed to be ubiquinone. Couples the redox reaction to proton translocation (for every two electrons transferred, four hydrogen ions are translocated across the cytoplasmic membrane), and thus conserves the redox energy in a proton gradient. The chain is NADH-quinone oxidoreductase subunit C from Rickettsia bellii (strain RML369-C).